The sequence spans 144 residues: uncharacterized protein (144 aa).

This is an uncharacterized protein from Archaeoglobus fulgidus (strain ATCC 49558 / DSM 4304 / JCM 9628 / NBRC 100126 / VC-16).